The chain runs to 200 residues: Small ribosomal subunit protein eS1 (200 aa).

This sequence belongs to the eukaryotic ribosomal protein eS1 family.

The protein is Small ribosomal subunit protein eS1 of Thermococcus onnurineus (strain NA1).